A 507-amino-acid chain; its full sequence is Keratin, type II cuticular Hb5 (507 aa).

The tract at residues 1 to 123 (MSCRSYRISS…PNAQCVKQEE (123 aa)) is head. Residues 123–434 (EKEQIKSLNS…RLLEGEEHRL (312 aa)) enclose the IF rod domain. The segment at 124-158 (KEQIKSLNSRFAAFIDKVRFLEQQNKLLETKWQFY) is coil 1A. Residues 159–168 (QNQRCCESNL) form a linker 1 region. The segment at 169–269 (EPLFSGYIET…YEEEIRVLQA (101 aa)) is coil 1B. A Glycyl lysine isopeptide (Lys-Gly) (interchain with G-Cter in SUMO1) cross-link involves residue lysine 229. The linker 12 stretch occupies residues 270–286 (HISDTSVIVKMDNSRDL). A coil 2 region spans residues 287–430 (NMDCIIAEIK…ATYRRLLEGE (144 aa)). Positions 431 to 507 (EHRLCEGVGS…CGSSRSVRFA (77 aa)) are tail.

The protein belongs to the intermediate filament family. Heterotetramer of two type I and two type II keratins. As to expression, synthesis occurs immediately above a small population of matrix cells at the base of the hair bulb and the trichocytes lining the dermal papilla and extends upward through the matrix and ends in the lower part of the cortex of the hair shaft.

The polypeptide is Keratin, type II cuticular Hb5 (KRT85) (Homo sapiens (Human)).